Reading from the N-terminus, the 248-residue chain is Deoxyribose-phosphate aldolase (248 aa).

The active-site Proton donor/acceptor is the Asp106. The active-site Schiff-base intermediate with acetaldehyde is the Lys168. Lys197 (proton donor/acceptor) is an active-site residue.

The protein belongs to the DeoC/FbaB aldolase family. DeoC type 1 subfamily.

The protein resides in the cytoplasm. It catalyses the reaction 2-deoxy-D-ribose 5-phosphate = D-glyceraldehyde 3-phosphate + acetaldehyde. It functions in the pathway carbohydrate degradation; 2-deoxy-D-ribose 1-phosphate degradation; D-glyceraldehyde 3-phosphate and acetaldehyde from 2-deoxy-alpha-D-ribose 1-phosphate: step 2/2. Functionally, catalyzes a reversible aldol reaction between acetaldehyde and D-glyceraldehyde 3-phosphate to generate 2-deoxy-D-ribose 5-phosphate. The polypeptide is Deoxyribose-phosphate aldolase (Sinorhizobium medicae (strain WSM419) (Ensifer medicae)).